Reading from the N-terminus, the 178-residue chain is MRAYIFQDEGDQRKPNDSKIEVSAEDLEAAKVSYRHHDGDLHTFADGLMKEYGFKNRDEVVVSRKGLGDRYDNMVKKFFEEHLHEDEEIRLILDGNGYFDVRSVDDRWVRIFVEKGDLIILPPGIYHRFTTTTDDYIHAMRLFHENPKWIALSRTDSTSEELDARKSYLNSIKKSVYV.

Fe(2+)-binding residues include H82, H84, E88, and H127. 4 residues coordinate Ni(2+): H82, H84, E88, and H127. Position 157 is a phosphoserine (S157).

This sequence belongs to the acireductone dioxygenase (ARD) family. It depends on Fe(2+) as a cofactor. Ni(2+) is required as a cofactor.

Its subcellular location is the cytoplasm. It localises to the nucleus. The catalysed reaction is 1,2-dihydroxy-5-(methylsulfanyl)pent-1-en-3-one + O2 = 4-methylsulfanyl-2-oxobutanoate + formate + 2 H(+). The enzyme catalyses 1,2-dihydroxy-5-(methylsulfanyl)pent-1-en-3-one + O2 = 3-(methylsulfanyl)propanoate + CO + formate + 2 H(+). It participates in amino-acid biosynthesis; L-methionine biosynthesis via salvage pathway; L-methionine from S-methyl-5-thio-alpha-D-ribose 1-phosphate: step 5/6. Catalyzes 2 different reactions between oxygen and the acireductone 1,2-dihydroxy-3-keto-5-methylthiopentene (DHK-MTPene) depending upon the metal bound in the active site. Fe-containing acireductone dioxygenase (Fe-ARD) produces formate and 2-keto-4-methylthiobutyrate (KMTB), the alpha-ketoacid precursor of methionine in the methionine recycle pathway. Ni-containing acireductone dioxygenase (Ni-ARD) produces methylthiopropionate, carbon monoxide and formate, and does not lie on the methionine recycle pathway. The polypeptide is Acireductone dioxygenase (adi1) (Schizosaccharomyces pombe (strain 972 / ATCC 24843) (Fission yeast)).